Consider the following 152-residue polypeptide: 17.1 kDa class II heat shock protein (152 aa).

Residues 36–152 form the sHSP domain; sequence DAKAMAATPA…KPKTIQVKVA (117 aa).

It belongs to the small heat shock protein (HSP20) family.

It localises to the cytoplasm. This chain is 17.1 kDa class II heat shock protein (HSP17.7), found in Pisum sativum (Garden pea).